An 874-amino-acid polypeptide reads, in one-letter code: MYQTTAALRSAFLEYFRTNGHQVVDSSSLVPVNDPTLLFTNAGMNQFKDVFLGEDKRSYTRATSSQRCVRAGGKHNDLDNVGYTARHHTFFEMLGNFSFGDYFKRDAISFAWNFLTQELKLPKERLCVTIYETDDEAYDIWTKEIGVPAENLIRIGDNKGAPYASDNFWQMGDTGPCGPCSEIFYDHGDHIWGGRPGTPEEDGDRFIEIWNIVFMQYNRQSDGEMLPLPKPSVDTGMGIERIAAIMQGVHSNYEIDIFQALIKKTAEILSVTDLENKSLRVISDHIRSCAFLIADGVMPSNEGRGYVLRRIIRRAVRHGNKLGASDSFFYKLVPTLIEVMGDAAKGLVATQAIVEKSLKAEEEQFARTLERGLGILDGALNALKGDVLDGETAFKLYDTYGFPVDLTADVCREREITVDEAGFEVAMAEQRSRAQAAGQFETDYNDSLKIDELTHFSGYTELTAPGKITAIYMAGESVNSLSAGDEAVIVLDSTPFYGESGGQCGDRGVLSAKGIEFDVKDTQKYGQAVGHQGALTSGTLSVGDSLEANVDKKLRHRTELNHSVTHLLHAALRQLLGTHVTQKGSLVDSERLRFDFSHFEGVKPEELKAVEDLVNTQIRRNHKLSAEVMDMDQAKEKGAMALFGEKYTDEVRVVTMGDFSIELCGGTHVGRTGDIGLFKITSEGGIAAGVRRIEAVTGAAAMAYVAGQKAELDQAAALLKADSASVVSKLKAQLDRTKLLEKELSQLKDKLAAATSADLAGEAQQVNGVNVLVKKLDGVEAGALRGLQDELKQKLGSGIVVLGIAGDAKVNLIVGVTKDLTSKVKAGELVASIASQVGGKGGGRPDMAQAGGSQPENLDSALEQVIPWLTERLA.

4 residues coordinate Zn(2+): H562, H566, C664, and H668.

It belongs to the class-II aminoacyl-tRNA synthetase family. The cofactor is Zn(2+).

Its subcellular location is the cytoplasm. It carries out the reaction tRNA(Ala) + L-alanine + ATP = L-alanyl-tRNA(Ala) + AMP + diphosphate. In terms of biological role, catalyzes the attachment of alanine to tRNA(Ala) in a two-step reaction: alanine is first activated by ATP to form Ala-AMP and then transferred to the acceptor end of tRNA(Ala). Also edits incorrectly charged Ser-tRNA(Ala) and Gly-tRNA(Ala) via its editing domain. The protein is Alanine--tRNA ligase of Shewanella sediminis (strain HAW-EB3).